The primary structure comprises 369 residues: Phospho-N-acetylmuramoyl-pentapeptide-transferase (369 aa).

10 consecutive transmembrane segments (helical) span residues 30 to 50 (AAAI…IGYL), 73 to 93 (LPTM…LLWA), 99 to 119 (YVWL…IDDY), 140 to 160 (VSLG…SVLL), 171 to 191 (LMID…TAVS), 202 to 222 (GLAA…AYLT), 239 to 259 (GGEV…FLWF), 266 to 286 (IFMG…IALL), 291 to 311 (LLLP…SLQV), and 346 to 366 (KIVI…LMTL).

The protein belongs to the glycosyltransferase 4 family. MraY subfamily. It depends on Mg(2+) as a cofactor.

The protein localises to the cell inner membrane. The catalysed reaction is UDP-N-acetyl-alpha-D-muramoyl-L-alanyl-gamma-D-glutamyl-meso-2,6-diaminopimeloyl-D-alanyl-D-alanine + di-trans,octa-cis-undecaprenyl phosphate = di-trans,octa-cis-undecaprenyl diphospho-N-acetyl-alpha-D-muramoyl-L-alanyl-D-glutamyl-meso-2,6-diaminopimeloyl-D-alanyl-D-alanine + UMP. It participates in cell wall biogenesis; peptidoglycan biosynthesis. Functionally, catalyzes the initial step of the lipid cycle reactions in the biosynthesis of the cell wall peptidoglycan: transfers peptidoglycan precursor phospho-MurNAc-pentapeptide from UDP-MurNAc-pentapeptide onto the lipid carrier undecaprenyl phosphate, yielding undecaprenyl-pyrophosphoryl-MurNAc-pentapeptide, known as lipid I. In Chlorobium phaeobacteroides (strain BS1), this protein is Phospho-N-acetylmuramoyl-pentapeptide-transferase.